We begin with the raw amino-acid sequence, 200 residues long: Small ribosomal subunit protein uS5 (200 aa).

Positions 1–22 (MAEERGEKRGRRRDRENPRDRD) are enriched in basic and acidic residues. The segment at 1 to 26 (MAEERGEKRGRRRDRENPRDRDDESS) is disordered. Positions 28–91 (LVDKLVGINR…EEAKRNLVRI (64 aa)) constitute an S5 DRBM domain.

Belongs to the universal ribosomal protein uS5 family. In terms of assembly, part of the 30S ribosomal subunit. Contacts proteins S4 and S8.

With S4 and S12 plays an important role in translational accuracy. Functionally, located at the back of the 30S subunit body where it stabilizes the conformation of the head with respect to the body. This Hyphomonas neptunium (strain ATCC 15444) protein is Small ribosomal subunit protein uS5.